Here is a 310-residue protein sequence, read N- to C-terminus: p-hydroxybenzoic acid efflux pump subunit AaeA (310 aa).

Residues 12–32 traverse the membrane as a helical segment; it reads AITVVLVILAFIAIFNAWVYY.

The protein belongs to the membrane fusion protein (MFP) (TC 8.A.1) family.

Its subcellular location is the cell inner membrane. Its function is as follows. Forms an efflux pump with AaeB. The polypeptide is p-hydroxybenzoic acid efflux pump subunit AaeA (Shigella flexneri).